The following is a 314-amino-acid chain: Methionyl-tRNA formyltransferase (314 aa).

Ser-110–Pro-113 serves as a coordination point for (6S)-5,6,7,8-tetrahydrofolate.

The protein belongs to the Fmt family.

It catalyses the reaction L-methionyl-tRNA(fMet) + (6R)-10-formyltetrahydrofolate = N-formyl-L-methionyl-tRNA(fMet) + (6S)-5,6,7,8-tetrahydrofolate + H(+). Attaches a formyl group to the free amino group of methionyl-tRNA(fMet). The formyl group appears to play a dual role in the initiator identity of N-formylmethionyl-tRNA by promoting its recognition by IF2 and preventing the misappropriation of this tRNA by the elongation apparatus. The chain is Methionyl-tRNA formyltransferase from Bacillus cereus (strain B4264).